We begin with the raw amino-acid sequence, 137 residues long: ATP synthase epsilon chain, sodium ion specific (137 aa).

It belongs to the ATPase epsilon chain family. As to quaternary structure, F-type ATPases have 2 components, CF(1) - the catalytic core - and CF(0) - the membrane proton channel. CF(1) has five subunits: alpha(3), beta(3), gamma(1), delta(1), epsilon(1). CF(0) has three main subunits: a, b and c.

It localises to the cell inner membrane. In terms of biological role, produces ATP from ADP in the presence of a sodium gradient across the membrane. In Propionigenium modestum, this protein is ATP synthase epsilon chain, sodium ion specific (atpC).